A 275-amino-acid chain; its full sequence is Large ribosomal subunit protein uL2 (275 aa).

The disordered stretch occupies residues 227 to 261 (PVDHPHGGGEAKSGQGNPHPVTPWGVPTKGYKTRK).

Belongs to the universal ribosomal protein uL2 family. In terms of assembly, part of the 50S ribosomal subunit. Forms a bridge to the 30S subunit in the 70S ribosome.

Its function is as follows. One of the primary rRNA binding proteins. Required for association of the 30S and 50S subunits to form the 70S ribosome, for tRNA binding and peptide bond formation. It has been suggested to have peptidyltransferase activity; this is somewhat controversial. Makes several contacts with the 16S rRNA in the 70S ribosome. The polypeptide is Large ribosomal subunit protein uL2 (Xylella fastidiosa (strain M23)).